The sequence spans 127 residues: Small ribosomal subunit protein uS17m (127 aa).

The protein belongs to the universal ribosomal protein uS17 family.

It is found in the mitochondrion. The protein is Small ribosomal subunit protein uS17m (mrps17) of Dictyostelium discoideum (Social amoeba).